A 119-amino-acid chain; its full sequence is Ribonuclease P protein component (119 aa).

The protein belongs to the RnpA family. As to quaternary structure, consists of a catalytic RNA component (M1 or rnpB) and a protein subunit.

It carries out the reaction Endonucleolytic cleavage of RNA, removing 5'-extranucleotides from tRNA precursor.. Its function is as follows. RNaseP catalyzes the removal of the 5'-leader sequence from pre-tRNA to produce the mature 5'-terminus. It can also cleave other RNA substrates such as 4.5S RNA. The protein component plays an auxiliary but essential role in vivo by binding to the 5'-leader sequence and broadening the substrate specificity of the ribozyme. In Streptococcus equi subsp. equi (strain 4047), this protein is Ribonuclease P protein component.